We begin with the raw amino-acid sequence, 143 residues long: Transcription antitermination protein NusB (143 aa).

Belongs to the NusB family.

In terms of biological role, involved in transcription antitermination. Required for transcription of ribosomal RNA (rRNA) genes. Binds specifically to the boxA antiterminator sequence of the ribosomal RNA (rrn) operons. The protein is Transcription antitermination protein NusB of Mannheimia succiniciproducens (strain KCTC 0769BP / MBEL55E).